A 453-amino-acid polypeptide reads, in one-letter code: Exopolyphosphatase PRUNE1 (453 aa).

Methionine 1 is subject to N-acetylmethionine. Mn(2+) is bound by residues aspartate 28, aspartate 30, aspartate 106, and aspartate 179. A DHH motif motif is present at residues 106-108 (DHH). Residues 393–420 (SLISGLSQDEEDPPLPPTPMNSLVDECP) form an essential for homodimerization region. The disordered stretch occupies residues 395–421 (ISGLSQDEEDPPLPPTPMNSLVDECPL). Serine 399 carries the phosphoserine modification. Threonine 410 is subject to Phosphothreonine. Position 414 is a phosphoserine (serine 414).

Belongs to the PPase class C family. Prune subfamily. Homooligomer. Able to homodimerize via its C-terminal domain. Interacts with NME1. Interacts with GSK3; at focal adhesion complexes where paxillin and vinculin are colocalized. Interacts with alpha and beta tubulin. Mn(2+) is required as a cofactor. In terms of tissue distribution, ubiquitously expressed. Seems to be overexpressed in aggressive sarcoma subtypes, such as leiomyosarcomas and malignant fibrous histiocytomas (MFH) as well as in the less malignant liposarcomas.

The protein localises to the cytoplasm. The protein resides in the nucleus. It localises to the cell junction. Its subcellular location is the focal adhesion. It carries out the reaction diphosphate + H2O = 2 phosphate + H(+). Activated by magnesium ions and inhibited by manganese ions. Inhibited by dipyridamole, moderately sensitive to IBMX and inhibited by vinpocetine. In terms of biological role, phosphodiesterase (PDE) that has higher activity toward cAMP than cGMP, as substrate. Plays a role in cell proliferation, migration and differentiation, and acts as a negative regulator of NME1. Plays a role in the regulation of neurogenesis. Involved in the regulation of microtubule polymerization. The polypeptide is Exopolyphosphatase PRUNE1 (Homo sapiens (Human)).